A 344-amino-acid chain; its full sequence is Methionine import ATP-binding protein MetN 1 (344 aa).

The 240-residue stretch at 2 to 241 folds into the ABC transporter domain; the sequence is IELRNLSQRF…PHHEVTRALI (240 aa). Position 38-45 (38-45) interacts with ATP; sequence GRSGAGKS.

This sequence belongs to the ABC transporter superfamily. Methionine importer (TC 3.A.1.24) family. The complex is composed of two ATP-binding proteins (MetN), two transmembrane proteins (MetI) and a solute-binding protein (MetQ).

The protein resides in the cell inner membrane. It catalyses the reaction L-methionine(out) + ATP + H2O = L-methionine(in) + ADP + phosphate + H(+). The catalysed reaction is D-methionine(out) + ATP + H2O = D-methionine(in) + ADP + phosphate + H(+). Part of the ABC transporter complex MetNIQ involved in methionine import. Responsible for energy coupling to the transport system. The protein is Methionine import ATP-binding protein MetN 1 of Burkholderia lata (strain ATCC 17760 / DSM 23089 / LMG 22485 / NCIMB 9086 / R18194 / 383).